Consider the following 1083-residue polypeptide: UPF0182 protein BAD_0641 (1083 aa).

The interval 1–72 (MSFFDMFGPM…TSKPNRPRKP (72 aa)) is disordered. The next 7 membrane-spanning stretches (helical) occupy residues 78–98 (IFIG…ALAQ), 125–145 (LWLA…TLAI), 178–198 (IAVV…NANW), 239–259 (SLLL…MGGI), 281–301 (IGIW…LGVF), 325–345 (VTFI…LWIM), and 372–392 (VAIA…PVLL). The segment at 976 to 1061 (DSGASAGDAE…SDAAMKKGDW (86 aa)) is disordered. Composition is skewed to basic and acidic residues over residues 991–1013 (TDDK…DGKQ) and 1050–1060 (KDSDAAMKKGD).

Belongs to the UPF0182 family.

Its subcellular location is the cell membrane. The polypeptide is UPF0182 protein BAD_0641 (Bifidobacterium adolescentis (strain ATCC 15703 / DSM 20083 / NCTC 11814 / E194a)).